The primary structure comprises 128 residues: Large ribosomal subunit protein bL12c (128 aa).

The interval 103-128 (QEGLGKDAAEDAKKQIEDAGGKVSLT) is disordered. Residues 106–122 (LGKDAAEDAKKQIEDAG) are compositionally biased toward basic and acidic residues.

The protein belongs to the bacterial ribosomal protein bL12 family. In terms of assembly, homodimer. Part of the ribosomal stalk of the 50S ribosomal subunit. Forms a multimeric L10(L12)X complex, where L10 forms an elongated spine to which 2 to 4 L12 dimers bind in a sequential fashion. Binds GTP-bound translation factors.

The protein localises to the plastid. The protein resides in the chloroplast. In terms of biological role, forms part of the ribosomal stalk which helps the ribosome interact with GTP-bound translation factors. Is thus essential for accurate translation. This chain is Large ribosomal subunit protein bL12c, found in Thalassiosira pseudonana (Marine diatom).